Reading from the N-terminus, the 217-residue chain is Large ribosomal subunit protein uL3 (217 aa).

Residues 127 to 162 (GFSRGPMSHGSKNHRAPGSTGAGTTPGRIYPGKRMA) are disordered. Low complexity predominate over residues 142-153 (APGSTGAGTTPG).

The protein belongs to the universal ribosomal protein uL3 family. As to quaternary structure, part of the 50S ribosomal subunit. Forms a cluster with proteins L14 and L19.

Its function is as follows. One of the primary rRNA binding proteins, it binds directly near the 3'-end of the 23S rRNA, where it nucleates assembly of the 50S subunit. This chain is Large ribosomal subunit protein uL3, found in Prochlorococcus marinus (strain MIT 9312).